A 735-amino-acid chain; its full sequence is Protein argonaute (735 aa).

The segment at methionine 1–aspartate 94 is N-terminal domain. The tract at residues cysteine 95–proline 180 is linker L1. The interval tryptophan 181–alanine 284 is PAZ domain. Residues lysine 285 to glycine 369 form a linker L2 region. Positions cysteine 370–isoleucine 498 are mid domain. The interval glutamine 499–valine 735 is PIWI domain. Catalysis depends on residues aspartate 516, glutamate 550, aspartate 584, and aspartate 709. Aspartate 516 serves as a coordination point for Mn(2+). 3 residues coordinate Mn(2+): aspartate 584, aspartate 709, and valine 735.

Belongs to the argonaute family. Long pAgo subfamily. As to quaternary structure, copurifies with SSB proteins Synpcc7942_0079 and Synpcc7942_0301 as well as other proteins. It depends on Mn(2+) as a cofactor.

Functionally, a DNA-guided ssDNA endonuclease that might play a role in defense against invading mobile genetic elements. Uses short ssDNA sequences as guides (gDNA) to bind complementary target strands, resulting in cleavage of the target DNA (tDNA). The cleavage site is 10 nucleotides (nt) downstream of the target residue base-paired with the 5'-end of the gDNA. Both 5'-P and 5'-OH gDNAs confer activity; a 5'-OH guide cleaves between nt 10-11 and nt 11-12. Guide DNA mismatches in the seed (nt 2-9) can enhance activity, mismatches 1-5 nt after the cleavage site block activity. Has no appreciable activity with guide RNA or on target RNA. In situ binds to 5'-phosphorylated DNA 14-20 nt in length; small DNA maps over the chromosome and plasmid with some preference for the replication origin and the probable termination site. Also has weak guide-independent nuclease activity on DNA called 'chopping'. Overexpression of wild-type or catalytically inactive mutant has no visible effect during growth under continuous high light for up to a month. The protein is Protein argonaute of Synechococcus elongatus (strain ATCC 33912 / PCC 7942 / FACHB-805) (Anacystis nidulans R2).